Reading from the N-terminus, the 160-residue chain is Ribonuclease H (160 aa).

Residues 1-157 enclose the RNase H type-1 domain; that stretch reads MNIEIYTDGA…CDRLAVEACQ (157 aa). 4 residues coordinate Mg(2+): aspartate 8, glutamate 49, aspartate 85, and aspartate 149.

Belongs to the RNase H family. Monomer. It depends on Mg(2+) as a cofactor.

The protein resides in the cytoplasm. The catalysed reaction is Endonucleolytic cleavage to 5'-phosphomonoester.. In terms of biological role, endonuclease that specifically degrades the RNA of RNA-DNA hybrids. This chain is Ribonuclease H, found in Treponema denticola (strain ATCC 35405 / DSM 14222 / CIP 103919 / JCM 8153 / KCTC 15104).